We begin with the raw amino-acid sequence, 129 residues long: uncharacterized protein (129 aa).

The segment covering 85-108 (SSAADSDDSSSCSECDSDALLSDD) has biased composition (low complexity). The segment at 85–110 (SSAADSDDSSSCSECDSDALLSDDGP) is disordered.

This is an uncharacterized protein from Microplitis demolitor (Parasitoid wasp).